A 287-amino-acid polypeptide reads, in one-letter code: MAIRTFRPYTPGTRTRVVTDFNEVTGRKPERSLVVAKHRRKGRNNRGVITCRHRGGGHKRLYRIVDFRRNKHGIPAKVAAIHYDPHRKAHLALLFYTDGEKRYILAPAGIAIGQQLISGPESPIETGNALPLSAIPLGSSVHNVELYAGRGGQMARTAGSSAQVMAKEGDYVALKLPSTEVRLVRHECYATLGEVGNSEVRNTSLGKAGRRRWLGRRPQVRGSVMNPCDHPHGGGEGRAPIGRSGPVTPWGKPALGLKTRKRNKPSNRFVLRKRRRTSKRSRGGRDS.

The tract at residues 221 to 287 is disordered; sequence RGSVMNPCDH…SKRSRGGRDS (67 aa). A compositionally biased stretch (basic residues) spans 258 to 287; the sequence is KTRKRNKPSNRFVLRKRRRTSKRSRGGRDS.

The protein belongs to the universal ribosomal protein uL2 family. As to quaternary structure, part of the 50S ribosomal subunit. Forms a bridge to the 30S subunit in the 70S ribosome.

Functionally, one of the primary rRNA binding proteins. Required for association of the 30S and 50S subunits to form the 70S ribosome, for tRNA binding and peptide bond formation. It has been suggested to have peptidyltransferase activity; this is somewhat controversial. Makes several contacts with the 16S rRNA in the 70S ribosome. In Prochlorococcus marinus (strain MIT 9313), this protein is Large ribosomal subunit protein uL2.